The chain runs to 189 residues: Adenylate kinase (189 aa).

11-16 (GSGKGT) lines the ATP pocket. The interval 31–60 (STGDVLRAEIKKGTELGKTAKGYIDQGQLL) is NMP. AMP is bound by residues T32, R37, 58–60 (QLL), 86–89 (GFPR), and Q93. The LID stretch occupies residues 127-137 (KRGQESGRADD). R128 is an ATP binding site. Positions 134 and 145 each coordinate AMP. Position 173 (G173) interacts with ATP.

It belongs to the adenylate kinase family. In terms of assembly, monomer.

The protein resides in the cytoplasm. The enzyme catalyses AMP + ATP = 2 ADP. The protein operates within purine metabolism; AMP biosynthesis via salvage pathway; AMP from ADP: step 1/1. Its function is as follows. Catalyzes the reversible transfer of the terminal phosphate group between ATP and AMP. Plays an important role in cellular energy homeostasis and in adenine nucleotide metabolism. The protein is Adenylate kinase of Phocaeicola vulgatus (strain ATCC 8482 / DSM 1447 / JCM 5826 / CCUG 4940 / NBRC 14291 / NCTC 11154) (Bacteroides vulgatus).